A 367-amino-acid polypeptide reads, in one-letter code: Glutamate 5-kinase (367 aa).

Position 10 (Lys10) interacts with ATP. Ser50, Asp137, and Asn149 together coordinate substrate. ATP contacts are provided by residues 169–170 (TD) and 211–217 (TGGMSTK). One can recognise a PUA domain in the interval 275–353 (AGEITVDDGA…QQIAEILGYE (79 aa)).

It belongs to the glutamate 5-kinase family.

It localises to the cytoplasm. The catalysed reaction is L-glutamate + ATP = L-glutamyl 5-phosphate + ADP. It participates in amino-acid biosynthesis; L-proline biosynthesis; L-glutamate 5-semialdehyde from L-glutamate: step 1/2. Its function is as follows. Catalyzes the transfer of a phosphate group to glutamate to form L-glutamate 5-phosphate. The protein is Glutamate 5-kinase of Pectobacterium carotovorum subsp. carotovorum (strain PC1).